Consider the following 403-residue polypeptide: Tyrosine--tRNA ligase (403 aa).

Positions 45-54 (PTAPDLHLGH) match the 'HIGH' region motif. The 'KMSKS' region signature appears at 229–233 (KMSKS). ATP is bound at residue K232. Residues 341-402 (VLLGRLLAEA…GKRRFARIVF (62 aa)) form the S4 RNA-binding domain.

The protein belongs to the class-I aminoacyl-tRNA synthetase family. TyrS type 2 subfamily. As to quaternary structure, homodimer.

The protein localises to the cytoplasm. The enzyme catalyses tRNA(Tyr) + L-tyrosine + ATP = L-tyrosyl-tRNA(Tyr) + AMP + diphosphate + H(+). In terms of biological role, catalyzes the attachment of tyrosine to tRNA(Tyr) in a two-step reaction: tyrosine is first activated by ATP to form Tyr-AMP and then transferred to the acceptor end of tRNA(Tyr). The polypeptide is Tyrosine--tRNA ligase (Geobacter metallireducens (strain ATCC 53774 / DSM 7210 / GS-15)).